A 201-amino-acid chain; its full sequence is Small ribosomal subunit protein uS4c (201 aa).

The 64-residue stretch at 89 to 152 (MRLDNILFRL…NSRTLVQNLL (64 aa)) folds into the S4 RNA-binding domain.

This sequence belongs to the universal ribosomal protein uS4 family. In terms of assembly, part of the 30S ribosomal subunit. Contacts protein S5. The interaction surface between S4 and S5 is involved in control of translational fidelity.

The protein localises to the plastid. Its subcellular location is the chloroplast. One of the primary rRNA binding proteins, it binds directly to 16S rRNA where it nucleates assembly of the body of the 30S subunit. Its function is as follows. With S5 and S12 plays an important role in translational accuracy. This is Small ribosomal subunit protein uS4c (rps4) from Olimarabidopsis pumila (Dwarf rocket).